An 89-amino-acid chain; its full sequence is UPF0237 protein CE1668 (89 aa).

In terms of domain architecture, ACT spans 4–78; that stretch reads IMTVTGQDHT…KEQGLVIRIQ (75 aa).

It belongs to the UPF0237 family.

This Corynebacterium efficiens (strain DSM 44549 / YS-314 / AJ 12310 / JCM 11189 / NBRC 100395) protein is UPF0237 protein CE1668.